A 211-amino-acid chain; its full sequence is Putative 3-methyladenine DNA glycosylase (211 aa).

It belongs to the DNA glycosylase MPG family.

In Granulibacter bethesdensis (strain ATCC BAA-1260 / CGDNIH1), this protein is Putative 3-methyladenine DNA glycosylase.